Reading from the N-terminus, the 78-residue chain is ATP synthase subunit c (78 aa).

2 consecutive transmembrane segments (helical) span residues 11–31 and 53–73; these read FIGA…VGHV and LFVG…IALL.

Belongs to the ATPase C chain family. As to quaternary structure, F-type ATPases have 2 components, F(1) - the catalytic core - and F(0) - the membrane proton channel. F(1) has five subunits: alpha(3), beta(3), gamma(1), delta(1), epsilon(1). F(0) has four main subunits: a(1), b(1), b'(1) and c(10-14). The alpha and beta chains form an alternating ring which encloses part of the gamma chain. F(1) is attached to F(0) by a central stalk formed by the gamma and epsilon chains, while a peripheral stalk is formed by the delta, b and b' chains.

It is found in the cell inner membrane. Functionally, f(1)F(0) ATP synthase produces ATP from ADP in the presence of a proton or sodium gradient. F-type ATPases consist of two structural domains, F(1) containing the extramembraneous catalytic core and F(0) containing the membrane proton channel, linked together by a central stalk and a peripheral stalk. During catalysis, ATP synthesis in the catalytic domain of F(1) is coupled via a rotary mechanism of the central stalk subunits to proton translocation. Key component of the F(0) channel; it plays a direct role in translocation across the membrane. A homomeric c-ring of between 10-14 subunits forms the central stalk rotor element with the F(1) delta and epsilon subunits. The polypeptide is ATP synthase subunit c (Cereibacter sphaeroides (strain ATCC 17025 / ATH 2.4.3) (Rhodobacter sphaeroides)).